A 323-amino-acid chain; its full sequence is NADH-ubiquinone oxidoreductase chain 1 (323 aa).

The next 8 helical transmembrane spans lie at 8 to 28 (VINPLAYIVPVLLAVAFLTLL), 74 to 94 (FLFLATPMLALTLALTLWAPM), 105 to 125 (LGVLFVLALSSLAVYSILGSG), 145 to 165 (ISYEVSLGLILLSVIIITGGF), 176 to 196 (SIWLLVPAWPLAAMWYISTLA), 236 to 256 (ILLMNTLSAVLFLGASHIPAF), 258 to 278 (ELTALNLMTKAALLSVVFLWV), and 298 to 318 (FLPLTLALVLWHLALPIALAG).

Belongs to the complex I subunit 1 family.

Its subcellular location is the mitochondrion inner membrane. The enzyme catalyses a ubiquinone + NADH + 5 H(+)(in) = a ubiquinol + NAD(+) + 4 H(+)(out). In terms of biological role, core subunit of the mitochondrial membrane respiratory chain NADH dehydrogenase (Complex I) that is believed to belong to the minimal assembly required for catalysis. Complex I functions in the transfer of electrons from NADH to the respiratory chain. The immediate electron acceptor for the enzyme is believed to be ubiquinone. The chain is NADH-ubiquinone oxidoreductase chain 1 (MT-ND1) from Oncorhynchus mykiss (Rainbow trout).